Consider the following 453-residue polypeptide: tRNA modification GTPase MnmE (453 aa).

Arg-22, Glu-79, and Lys-119 together coordinate (6S)-5-formyl-5,6,7,8-tetrahydrofolate. The TrmE-type G domain maps to 215-376 (GMKVVIAGRP…LRQHLKECMG (162 aa)). Residue Asn-225 participates in K(+) binding. GTP-binding positions include 225-230 (NAGKSS), 244-250 (TDIAGTT), 269-272 (DTAG), and 334-337 (NKAD). Residue Ser-229 participates in Mg(2+) binding. Residues Thr-244, Ile-246, and Thr-249 each contribute to the K(+) site. Mg(2+) is bound at residue Thr-250. Lys-453 is a binding site for (6S)-5-formyl-5,6,7,8-tetrahydrofolate.

It belongs to the TRAFAC class TrmE-Era-EngA-EngB-Septin-like GTPase superfamily. TrmE GTPase family. As to quaternary structure, homodimer. Heterotetramer of two MnmE and two MnmG subunits. K(+) serves as cofactor.

The protein localises to the cytoplasm. Its function is as follows. Exhibits a very high intrinsic GTPase hydrolysis rate. Involved in the addition of a carboxymethylaminomethyl (cmnm) group at the wobble position (U34) of certain tRNAs, forming tRNA-cmnm(5)s(2)U34. This Vibrio cholerae serotype O1 (strain ATCC 39315 / El Tor Inaba N16961) protein is tRNA modification GTPase MnmE.